We begin with the raw amino-acid sequence, 202 residues long: S-modulin (202 aa).

Residue glycine 2 is the site of N-myristoyl glycine attachment. 4 EF-hand domains span residues 25-60 (QEEL…FPDA), 61-96 (DPKA…TSSG), 97-132 (KANQ…IFKM), and 147-182 (TPEK…NKEI). Positions 74, 76, 78, 80, 85, 110, 112, 114, 116, and 121 each coordinate Ca(2+).

It belongs to the recoverin family. The N-terminus is blocked.

In terms of biological role, calcium-dependent regulator of light sensitivity of cGMP phosphodiesterase in rod outer segments. Controls rhodopsin phosphorylation in a Ca(2+)-dependent manner. This chain is S-modulin, found in Aquarana catesbeiana (American bullfrog).